The following is a 107-amino-acid chain: Nucleoid-associated protein YaaK (107 aa).

A disordered region spans residues 1–24 (MRGGMGNMQKMMKQMQKMQKDMAK). A compositionally biased stretch (low complexity) spans 8–17 (MQKMMKQMQK).

The protein belongs to the YbaB/EbfC family. As to quaternary structure, homodimer.

The protein localises to the cytoplasm. Its subcellular location is the nucleoid. Binds to DNA and alters its conformation. May be involved in regulation of gene expression, nucleoid organization and DNA protection. In Bacillus subtilis (strain 168), this protein is Nucleoid-associated protein YaaK (yaaK).